Consider the following 125-residue polypeptide: Large ribosomal subunit protein bL12 (125 aa).

Belongs to the bacterial ribosomal protein bL12 family. Homodimer. Part of the ribosomal stalk of the 50S ribosomal subunit. Forms a multimeric L10(L12)X complex, where L10 forms an elongated spine to which 2 to 4 L12 dimers bind in a sequential fashion. Binds GTP-bound translation factors.

In terms of biological role, forms part of the ribosomal stalk which helps the ribosome interact with GTP-bound translation factors. Is thus essential for accurate translation. The sequence is that of Large ribosomal subunit protein bL12 from Helicobacter pylori (strain ATCC 700392 / 26695) (Campylobacter pylori).